The primary structure comprises 493 residues: Glycosyltransferase alg8 (493 aa).

The next 4 membrane-spanning stretches (helical) occupy residues 13–32 (GWLF…PTSI), 47–69 (VGIW…LYIV), 380–402 (LTVA…LLWI), and 422–444 (PAYP…YVFF).

Belongs to the glycosyltransferase 2 family.

Its subcellular location is the cell membrane. It functions in the pathway glycan biosynthesis; alginate biosynthesis. Its function is as follows. Possibly a processive enzyme that polymerizes GDP-mannuronic acid. The polypeptide is Glycosyltransferase alg8 (alg8) (Pseudomonas syringae pv. tomato (strain ATCC BAA-871 / DC3000)).